The chain runs to 425 residues: Serine--tRNA ligase (425 aa).

Position 231-233 (231-233 (TAE)) interacts with L-serine. 262-264 (RSE) contacts ATP. Residue Glu-285 coordinates L-serine. Residue 349 to 352 (EISS) participates in ATP binding. Ser-385 lines the L-serine pocket.

Belongs to the class-II aminoacyl-tRNA synthetase family. Type-1 seryl-tRNA synthetase subfamily. Homodimer. The tRNA molecule binds across the dimer.

It is found in the cytoplasm. The enzyme catalyses tRNA(Ser) + L-serine + ATP = L-seryl-tRNA(Ser) + AMP + diphosphate + H(+). It carries out the reaction tRNA(Sec) + L-serine + ATP = L-seryl-tRNA(Sec) + AMP + diphosphate + H(+). It participates in aminoacyl-tRNA biosynthesis; selenocysteinyl-tRNA(Sec) biosynthesis; L-seryl-tRNA(Sec) from L-serine and tRNA(Sec): step 1/1. Catalyzes the attachment of serine to tRNA(Ser). Is also able to aminoacylate tRNA(Sec) with serine, to form the misacylated tRNA L-seryl-tRNA(Sec), which will be further converted into selenocysteinyl-tRNA(Sec). This is Serine--tRNA ligase from Halalkalibacterium halodurans (strain ATCC BAA-125 / DSM 18197 / FERM 7344 / JCM 9153 / C-125) (Bacillus halodurans).